The primary structure comprises 241 residues: NAD-dependent protein deacylase (241 aa).

One can recognise a Deacetylase sirtuin-type domain in the interval 1–237 (MNFPYRNIVV…PKLVDEILAL (237 aa)). Residue 13–32 (GAGISAESGIQTFRAQDGLW) participates in NAD(+) binding. The substrate site is built by Tyr57 and Arg60. Residue 94 to 97 (QNID) coordinates NAD(+). Catalysis depends on His112, which acts as the Proton acceptor. Residues Cys120 and Cys139 each contribute to the Zn(2+) site. NAD(+) is bound by residues 179–181 (GTS), 205–207 (NLE), and Ala223.

This sequence belongs to the sirtuin family. Class III subfamily. As to quaternary structure, monomer. The cofactor is Zn(2+).

It is found in the cytoplasm. Its subcellular location is the host cytoplasm. The protein localises to the host cytosol. It localises to the host nucleus. The enzyme catalyses N(6)-acetyl-L-lysyl-[protein] + NAD(+) + H2O = 2''-O-acetyl-ADP-D-ribose + nicotinamide + L-lysyl-[protein]. It carries out the reaction N(6)-succinyl-L-lysyl-[protein] + NAD(+) + H2O = 2''-O-succinyl-ADP-D-ribose + nicotinamide + L-lysyl-[protein]. In terms of biological role, NAD-dependent lysine deacetylase and desuccinylase that specifically removes acetyl and succinyl groups on target proteins. Modulates the activities of several proteins which are inactive in their acylated form. In the intracellular pathogen V.parahaemolyticus, this enzyme regulates host response during infection by induction of host histone deacetylation; it specifically causes deacetylation of histone lysine residues H3K56, H3K9, H3K18 and H4K16 which results in transcriptional repression of several host genes involved in epigenetic regulation, immune response, and autophagy. This Vibrio parahaemolyticus serotype O3:K6 (strain RIMD 2210633) protein is NAD-dependent protein deacylase.